Here is a 342-residue protein sequence, read N- to C-terminus: Methylthioribose-1-phosphate isomerase (342 aa).

Substrate-binding positions include 49–51 (RGA), R86, and Q187. D228 (proton donor) is an active-site residue. 238–239 (NK) is a binding site for substrate.

The protein belongs to the eIF-2B alpha/beta/delta subunits family. MtnA subfamily.

The catalysed reaction is 5-(methylsulfanyl)-alpha-D-ribose 1-phosphate = 5-(methylsulfanyl)-D-ribulose 1-phosphate. The protein operates within amino-acid biosynthesis; L-methionine biosynthesis via salvage pathway; L-methionine from S-methyl-5-thio-alpha-D-ribose 1-phosphate: step 1/6. Catalyzes the interconversion of methylthioribose-1-phosphate (MTR-1-P) into methylthioribulose-1-phosphate (MTRu-1-P). This chain is Methylthioribose-1-phosphate isomerase, found in Klebsiella pneumoniae subsp. pneumoniae (strain ATCC 700721 / MGH 78578).